Here is a 694-residue protein sequence, read N- to C-terminus: MAGVLRSLRFWMIICVQVLSLVLAQDRDEFVYHDFSQADLHLDGMASIDDGRLHLTNNTTKSTGHAFWKIPMNFTTSPSSSLSFSTEFVFAIFPLLGDGQGMAFVVAPFMDIRYSGDAASYLGLFNRKNDNKTENHILAVELDTNSSPEAIEDSDNHVGIDINSIISEDSANASYFSGTEGKNISFRLASEKSILVWIDYNGTEKLLNVTVAPVPTPKPALPYLSSSIKPRKPLLSRFINISEIFNGTMFVGFSGSTGTVKSDQYILGWSFKKGGQAESLDLSKILDPPNRPPPPSSPPPPPPPPPTPPTSRSKDSKNIIIICVTVTSIAFLLMLGGFLYLYKKKKYAEVLEHWENEYSPQRYSFRNLYKAIRGFRENRLLGAGGFGKVYKGELPSGTQIAVKRVYHNAEQGMKQYAAEIASMGRLRHKNLVQLLGYCRRKGELLLVYDYMPNGSLDDYLFNKNKLKDLTWSQRVNIIKGVASALLYLHEEWEQVVLHRDIKASNILLDADLNGRLGDFGLARFHDRGENLQATRVVGTIGYMAPELTAMGVATTKTDIYAFGSFILEVVCGRRPVEPDRPPEQMHLLKWVATCGKRDTLMDVVDSKLGDFKAKEAKLLLKLGMLCSQSNPESRPSMRHIIQYLEGNATIPSISFDTAGFGIPNISNETITQMTATSSSANFSFEDVTILFGGR.

A signal peptide spans 1–24 (MAGVLRSLRFWMIICVQVLSLVLA). The Extracellular portion of the chain corresponds to 25–318 (QDRDEFVYHD…PTSRSKDSKN (294 aa)). The segment at 27-272 (RDEFVYHDFS…DQYILGWSFK (246 aa)) is legume-lectin like. N-linked (GlcNAc...) asparagine glycans are attached at residues Asn-57, Asn-58, Asn-73, Asn-131, Asn-172, Asn-183, Asn-201, Asn-208, Asn-240, and Asn-246. The tract at residues 283-314 (SKILDPPNRPPPPSSPPPPPPPPPTPPTSRSK) is disordered. Pro residues predominate over residues 289 to 309 (PNRPPPPSSPPPPPPPPPTPP). The chain crosses the membrane as a helical span at residues 319-339 (IIIICVTVTSIAFLLMLGGFL). The Cytoplasmic segment spans residues 340-694 (YLYKKKKYAE…EDVTILFGGR (355 aa)). The Protein kinase domain occupies 375 to 650 (FRENRLLGAG…IQYLEGNATI (276 aa)). Residues 381-389 (LGAGGFGKV) and Lys-403 contribute to the ATP site. The active-site Proton acceptor is Asp-500.

This sequence in the C-terminal section; belongs to the protein kinase superfamily. Ser/Thr protein kinase family. The protein in the N-terminal section; belongs to the leguminous lectin family.

The protein localises to the cell membrane. It carries out the reaction L-seryl-[protein] + ATP = O-phospho-L-seryl-[protein] + ADP + H(+). The catalysed reaction is L-threonyl-[protein] + ATP = O-phospho-L-threonyl-[protein] + ADP + H(+). The sequence is that of Putative L-type lectin-domain containing receptor kinase II.2 (LECRK22) from Arabidopsis thaliana (Mouse-ear cress).